A 546-amino-acid chain; its full sequence is uncharacterized protein (546 aa).

Disordered regions lie at residues 37–101 (KEND…NQKL), 269–300 (QNKAAADLRKTESHGTHSQSTPPQHSSSQPEV), and 392–443 (LSDL…TSAC). Basic and acidic residues-rich tracts occupy residues 81–93 (DDVKEKKHPENNQ) and 274–283 (ADLRKTESHG). Over residues 284–298 (THSQSTPPQHSSSQP) the composition is skewed to low complexity.

This is an uncharacterized protein from Homo sapiens (Human).